The sequence spans 216 residues: Proenkephalin-A-B (216 aa).

Propeptides lie at residues 64–85, 93–131, 144–155, 165–175, and 183–207; these read MDEL…LAKN, EYDS…GEMN, STDLEDETRGIQ, VGRPEWWQDYQ, and TRFT…PDME. The disordered stretch occupies residues 114–133; that stretch reads PESAIYHDNNSETPGEMNKR.

This sequence belongs to the opioid neuropeptide precursor family. The N-terminal domain contains 6 conserved cysteines thought to be involved in disulfide bonding and/or processing.

It is found in the secreted. In terms of biological role, enkephalin neuropeptides compete with and mimic the effects of opiate drugs. They play a role in a number of physiologic functions, including pain perception and responses to stress. This Xenopus laevis (African clawed frog) protein is Proenkephalin-A-B (penk-b).